The primary structure comprises 161 residues: Cytochrome b6-f complex subunit 4 (161 aa).

The next 3 helical transmembrane spans lie at 37 to 57, 96 to 116, and 132 to 152; these read LLYIFPVVILGSIALCVGLAV, LLGVVLMGSIPLGLMLVPFIE, and TVFLFGTLFTLWLGIGATFPI.

Belongs to the cytochrome b family. PetD subfamily. The 4 large subunits of the cytochrome b6-f complex are cytochrome b6, subunit IV (17 kDa polypeptide, PetD), cytochrome f and the Rieske protein, while the 4 small subunits are PetG, PetL, PetM and PetN. The complex functions as a dimer.

It localises to the cellular thylakoid membrane. Functionally, component of the cytochrome b6-f complex, which mediates electron transfer between photosystem II (PSII) and photosystem I (PSI), cyclic electron flow around PSI, and state transitions. The sequence is that of Cytochrome b6-f complex subunit 4 from Cyanothece sp. (strain PCC 7425 / ATCC 29141).